The sequence spans 73 residues: Kappa-scoloptoxin(03)-Ssm1c (73 aa).

The signal sequence occupies residues 1–23 (MKSWMAILLVMALIIFTLDNCYS). 3 disulfides stabilise this stretch: cysteine 32–cysteine 58, cysteine 41–cysteine 57, and cysteine 44–cysteine 67.

Belongs to the scoloptoxin family. In terms of tissue distribution, expressed by the venom gland.

The protein localises to the secreted. In terms of biological role, inhibits voltage-gated potassium channels. This is Kappa-scoloptoxin(03)-Ssm1c from Scolopendra mutilans (Chinese red-headed centipede).